We begin with the raw amino-acid sequence, 197 residues long: Phospholipid hydroperoxide glutathione peroxidase (197 aa).

The residue at position 40 (serine 40) is a Phosphoserine. Selenocysteine 73 is an active-site residue. Residue selenocysteine 73 is a non-standard amino acid, selenocysteine.

Belongs to the glutathione peroxidase family. In terms of assembly, monomer. Has a tendency to form higher mass oligomers. Interacts with FUNDC1; this interaction promotes GPX4 recruitment into mitochondria through TOM/TIM complex where it is degraded by mitophagy.

It localises to the mitochondrion. It is found in the cytoplasm. The catalysed reaction is a hydroperoxy polyunsaturated fatty acid + 2 glutathione = a hydroxy polyunsaturated fatty acid + glutathione disulfide + H2O. It carries out the reaction (12S)-hydroperoxy-(5Z,8Z,10E,14Z)-eicosatetraenoate + 2 glutathione = (12S)-hydroxy-(5Z,8Z,10E,14Z)-eicosatetraenoate + glutathione disulfide + H2O. It catalyses the reaction (13S)-hydroperoxy-(9Z,11E)-octadecadienoate + 2 glutathione = (13S)-hydroxy-(9Z,11E)-octadecadienoate + glutathione disulfide + H2O. Essential antioxidant peroxidase that directly reduces phospholipid hydroperoxide even if they are incorporated in membranes and lipoproteins. Can also reduce fatty acid hydroperoxide, cholesterol hydroperoxide and thymine hydroperoxide. Plays a key role in protecting cells from oxidative damage by preventing membrane lipid peroxidation. Required to prevent cells from ferroptosis, a non-apoptotic cell death resulting from an iron-dependent accumulation of lipid reactive oxygen species. The presence of selenocysteine (Sec) versus Cys at the active site is essential for life: it provides resistance to overoxidation and prevents cells against ferroptosis. The presence of Sec at the active site is also essential for the survival of a specific type of parvalbumin-positive interneurons, thereby preventing against fatal epileptic seizures. May be required to protect cells from the toxicity of ingested lipid hydroperoxides. Required for normal sperm development and male fertility. Essential for maturation and survival of photoreceptor cells. Plays a role in a primary T-cell response to viral and parasitic infection by protecting T-cells from ferroptosis and by supporting T-cell expansion. Plays a role of glutathione peroxidase in platelets in the arachidonic acid metabolism. Reduces hydroperoxy ester lipids formed by a 15-lipoxygenase that may play a role as down-regulator of the cellular 15-lipoxygenase pathway. The protein is Phospholipid hydroperoxide glutathione peroxidase of Sapajus apella (Brown-capped capuchin).